The sequence spans 182 residues: Ribosome-recycling factor (182 aa).

This sequence belongs to the RRF family.

The protein resides in the cytoplasm. Responsible for the release of ribosomes from messenger RNA at the termination of protein biosynthesis. May increase the efficiency of translation by recycling ribosomes from one round of translation to another. This chain is Ribosome-recycling factor, found in Prochlorococcus marinus (strain MIT 9312).